The primary structure comprises 331 residues: Glycerol-3-phosphate dehydrogenase [NAD(P)+] (331 aa).

NADPH contacts are provided by Ser-11, Phe-12, Arg-32, and Lys-106. Sn-glycerol 3-phosphate is bound by residues Lys-106, Gly-134, and Ser-136. NADPH is bound at residue Ala-138. Residues Lys-189, Asp-242, Ser-252, Arg-253, and Asn-254 each contribute to the sn-glycerol 3-phosphate site. The active-site Proton acceptor is the Lys-189. Arg-253 provides a ligand contact to NADPH. Val-277 and Glu-279 together coordinate NADPH.

Belongs to the NAD-dependent glycerol-3-phosphate dehydrogenase family.

It is found in the cytoplasm. It carries out the reaction sn-glycerol 3-phosphate + NAD(+) = dihydroxyacetone phosphate + NADH + H(+). The enzyme catalyses sn-glycerol 3-phosphate + NADP(+) = dihydroxyacetone phosphate + NADPH + H(+). It functions in the pathway membrane lipid metabolism; glycerophospholipid metabolism. Functionally, catalyzes the reduction of the glycolytic intermediate dihydroxyacetone phosphate (DHAP) to sn-glycerol 3-phosphate (G3P), the key precursor for phospholipid synthesis. The polypeptide is Glycerol-3-phosphate dehydrogenase [NAD(P)+] (Clostridium perfringens (strain SM101 / Type A)).